A 1154-amino-acid polypeptide reads, in one-letter code: ATP-dependent helicase/deoxyribonuclease subunit B (1154 aa).

The 284-residue stretch at 1-284 (MSVRFIIGRS…EQLRHNVRHK (284 aa)) folds into the UvrD-like helicase ATP-binding domain. An ATP-binding site is contributed by 8–15 (GRSGSGKT). The UvrD-like helicase C-terminal domain maps to 279–583 (HNVRHKHEEL…QFSLVPPATD (305 aa)). Residues Cys799, Cys1120, Cys1123, and Cys1129 each coordinate [4Fe-4S] cluster.

Belongs to the helicase family. AddB/RexB type 1 subfamily. Heterodimer of AddA and AddB. Requires Mg(2+) as cofactor. The cofactor is [4Fe-4S] cluster.

Its function is as follows. The heterodimer acts as both an ATP-dependent DNA helicase and an ATP-dependent, dual-direction single-stranded exonuclease. Recognizes the chi site generating a DNA molecule suitable for the initiation of homologous recombination. The AddB subunit has 5' -&gt; 3' nuclease activity but not helicase activity. The sequence is that of ATP-dependent helicase/deoxyribonuclease subunit B from Anoxybacillus flavithermus (strain DSM 21510 / WK1).